A 283-amino-acid polypeptide reads, in one-letter code: Thymidylate synthase (283 aa).

Arg-22 contributes to the dUMP binding site. Residue Cys-160 is the Nucleophile of the active site. DUMP-binding positions include 180–183 (RSCD), Asn-191, and 221–223 (HIY). Asp-183 serves as a coordination point for (6R)-5,10-methylene-5,6,7,8-tetrahydrofolate. Ser-282 provides a ligand contact to (6R)-5,10-methylene-5,6,7,8-tetrahydrofolate.

Belongs to the thymidylate synthase family. Bacterial-type ThyA subfamily. As to quaternary structure, homodimer.

The protein localises to the cytoplasm. The enzyme catalyses dUMP + (6R)-5,10-methylene-5,6,7,8-tetrahydrofolate = 7,8-dihydrofolate + dTMP. The protein operates within pyrimidine metabolism; dTTP biosynthesis. Its function is as follows. Catalyzes the reductive methylation of 2'-deoxyuridine-5'-monophosphate (dUMP) to 2'-deoxythymidine-5'-monophosphate (dTMP) while utilizing 5,10-methylenetetrahydrofolate (mTHF) as the methyl donor and reductant in the reaction, yielding dihydrofolate (DHF) as a by-product. This enzymatic reaction provides an intracellular de novo source of dTMP, an essential precursor for DNA biosynthesis. The chain is Thymidylate synthase from Vibrio cholerae serotype O1 (strain ATCC 39315 / El Tor Inaba N16961).